The primary structure comprises 31 residues: Phospholipase A2 homolog P-elapitoxin-Aa1a beta chain (31 aa).

The protein belongs to the phospholipase A2 family. Group I subfamily. Heterotrimer of alpha, beta and gamma chains, each related to PLA2. As to expression, expressed by the venom gland.

It is found in the secreted. Functionally, heterotrimer: Snake venom phospholipase A2 (PLA2) that has presynaptic neurotoxicity. Inhibits nerve-evoked twitch contractions but not responses to cholinergic agonists acetylcholine and carbachol and to depolarizing agonist KCl. Causes a fade in tetanic contractions. Displays a triphasic mode of action with depression, enhancement and blockade of neurotransmission. Does not display myotoxic activity such as changes in baseline muscle tension or inhibition of directly stimulated muscle twitches. All subunits are necessary for maximum toxicity. Its function is as follows. Monomer: The beta chain has no enzymatic activity and is not toxic by itself. The sequence is that of Phospholipase A2 homolog P-elapitoxin-Aa1a beta chain from Acanthophis antarcticus (Common death adder).